We begin with the raw amino-acid sequence, 120 residues long: UPF0102 protein Pfl01_4685 (120 aa).

The protein belongs to the UPF0102 family.

This chain is UPF0102 protein Pfl01_4685, found in Pseudomonas fluorescens (strain Pf0-1).